Reading from the N-terminus, the 256-residue chain is 2,3,4,5-tetrahydropyridine-2,6-dicarboxylate N-acetyltransferase (256 aa).

Belongs to the transferase hexapeptide repeat family. DapH subfamily.

It catalyses the reaction (S)-2,3,4,5-tetrahydrodipicolinate + acetyl-CoA + H2O = L-2-acetamido-6-oxoheptanedioate + CoA. Its pathway is amino-acid biosynthesis; L-lysine biosynthesis via DAP pathway; LL-2,6-diaminopimelate from (S)-tetrahydrodipicolinate (acetylase route): step 1/3. In terms of biological role, catalyzes the transfer of an acetyl group from acetyl-CoA to tetrahydrodipicolinate. This Lactococcus lactis subsp. lactis (strain IL1403) (Streptococcus lactis) protein is 2,3,4,5-tetrahydropyridine-2,6-dicarboxylate N-acetyltransferase.